A 368-amino-acid polypeptide reads, in one-letter code: Peptide chain release factor 2 (368 aa).

Q250 carries the N5-methylglutamine modification.

Belongs to the prokaryotic/mitochondrial release factor family. Post-translationally, methylated by PrmC. Methylation increases the termination efficiency of RF2.

Its subcellular location is the cytoplasm. Functionally, peptide chain release factor 2 directs the termination of translation in response to the peptide chain termination codons UGA and UAA. The protein is Peptide chain release factor 2 of Chlamydia trachomatis serovar L2 (strain ATCC VR-902B / DSM 19102 / 434/Bu).